Reading from the N-terminus, the 478-residue chain is Probable cytosolic Fe-S cluster assembly factor CPIJ010948 (478 aa).

Residues C23, C69, C72, C75, C189, C245, C396, and C400 each coordinate [4Fe-4S] cluster.

Belongs to the NARF family.

Functionally, component of the cytosolic iron-sulfur (Fe/S) protein assembly machinery. Required for maturation of extramitochondrial Fe/S proteins. The polypeptide is Probable cytosolic Fe-S cluster assembly factor CPIJ010948 (Culex quinquefasciatus (Southern house mosquito)).